The chain runs to 478 residues: Probable L-ascorbate peroxidase 8, chloroplastic (478 aa).

Residues 1 to 13 (MAERIAASLLPAA) show a composition bias toward low complexity. Disordered stretches follow at residues 1-31 (MAER…VSAA) and 44-66 (GGLR…RSGR). The N-terminal 76 residues, 1–76 (MAERIAASLL…AGAGARAVVR (76 aa)), are a transit peptide targeting the chloroplast. Over residues 14-26 (SPSPAPSPPPPRP) the composition is skewed to pro residues. The active-site Proton acceptor is the histidine 117. Residues 245 to 276 (AHTLGRSRPDRSGWGKPETKYTKDGPGEPGGQ) form a disordered region. Histidine 246 is a heme b binding site. A K(+)-binding site is contributed by threonine 247. Over residues 251–270 (SRPDRSGWGKPETKYTKDGP) the composition is skewed to basic and acidic residues. Residues threonine 279 and aspartate 286 each contribute to the K(+) site. Residues 346-417 (AKFDPPEGFS…DNNGAAPQPE (72 aa)) form a disordered region. Residues 369–381 (PAPAPAAAPPPPP) are compositionally biased toward pro residues. The span at 394–406 (PVTVGAAVASSPA) shows a compositional bias: low complexity. Residues 458–478 (YFLNIMLLIGGLAFLTSLLGS) traverse the membrane as a helical segment.

This sequence belongs to the peroxidase family. Ascorbate peroxidase subfamily. Interacts with SWEET11/OS8N3. It depends on heme b as a cofactor. As to expression, expressed in roots, leaves, stems and flowers. Expressed in leaves, shoots and panicles. Expressed at low levels in roots.

It localises to the plastid. The protein localises to the chloroplast thylakoid membrane. The enzyme catalyses L-ascorbate + H2O2 = L-dehydroascorbate + 2 H2O. Its function is as follows. Involved in defense response and tolerance to the bacterial pathogen Xanthomonas oryzae pv. oryzae (Xoo). Plays an important role in hydrogen peroxide removal during infection by Xoo. Involved in response to abiotic stress. Plays a role in hydrogen peroxide removal durings salt stress. This chain is Probable L-ascorbate peroxidase 8, chloroplastic, found in Oryza sativa subsp. japonica (Rice).